A 155-amino-acid chain; its full sequence is Glutaredoxin-related protein 5, mitochondrial (155 aa).

Residues 1-14 constitute a mitochondrion transit peptide; it reads MNSVFRSTARCLRS. Positions 42-145 constitute a Glutaredoxin domain; sequence QKNLEEMVKK…EELQKLGIRS (104 aa). A glutathione-binding site is contributed by K59. C67 provides a ligand contact to [2Fe-2S] cluster. Glutathione is bound by residues 97-101, I109, and 122-123; these read RQGIK and CD.

As to quaternary structure, homodimer.

It localises to the mitochondrion. Its function is as follows. Monothiol glutaredoxin involved in mitochondrial iron-sulfur (Fe/S) cluster transfer. Receives iron-sulfur clusters from scaffold protein ISCU and mediates their transfer to apoproteins, to the 4Fe/FS cluster biosynthesis machinery, or export from mitochondrion. Required for normal hemoglobin biosynthesis. The sequence is that of Glutaredoxin-related protein 5, mitochondrial (glrx5) from Danio rerio (Zebrafish).